The sequence spans 162 residues: Nucleotide-binding protein SAV_4896 (162 aa).

This sequence belongs to the YajQ family.

Functionally, nucleotide-binding protein. The protein is Nucleotide-binding protein SAV_4896 of Streptomyces avermitilis (strain ATCC 31267 / DSM 46492 / JCM 5070 / NBRC 14893 / NCIMB 12804 / NRRL 8165 / MA-4680).